The primary structure comprises 325 residues: Deoxyhypusine hydroxylase (325 aa).

Serine 2 bears the N-acetylserine mark. 2 HEAT-like PBS-type repeats span residues 77 to 103 (LKHE…VMLD) and 110 to 136 (VRHE…AAKE). Positions 79, 80, 112, and 113 each coordinate Fe cation. The residue at position 126 (serine 126) is a Phosphoserine. Phosphothreonine is present on threonine 187. 3 HEAT-like PBS-type repeats span residues 202–231 (LFQR…FSAE), 235–261 (FKHE…VLGR), and 268–294 (VRHE…YLND). Fe cation is bound by residues histidine 237, glutamate 238, histidine 270, and glutamate 271. A Phosphoserine modification is found at serine 281.

It belongs to the deoxyhypusine hydroxylase family. Fe(2+) serves as cofactor.

It localises to the cytoplasm. The protein localises to the nucleus. It carries out the reaction [eIF5A protein]-deoxyhypusine + AH2 + O2 = [eIF5A protein]-hypusine + A + H2O. It functions in the pathway protein modification; eIF5A hypusination. Its function is as follows. Catalyzes the hydroxylation of the N(6)-(4-aminobutyl)-L-lysine intermediate to form hypusine, an essential post-translational modification only found in mature eIF-5A factor. The sequence is that of Deoxyhypusine hydroxylase from Saccharomyces cerevisiae (strain ATCC 204508 / S288c) (Baker's yeast).